A 434-amino-acid polypeptide reads, in one-letter code: Hydrogenobyrinate a,c-diamide synthase (434 aa).

One can recognise a GATase cobBQ-type domain in the interval 243 to 434; that stretch reads RIAVARDIAF…MHLIDVAGAA (192 aa). Catalysis depends on Cys326, which acts as the Nucleophile.

Belongs to the CobB/CbiA family. In terms of assembly, homodimer. The cofactor is Mg(2+).

The enzyme catalyses hydrogenobyrinate + 2 L-glutamine + 2 ATP + 2 H2O = hydrogenobyrinate a,c-diamide + 2 L-glutamate + 2 ADP + 2 phosphate + 2 H(+). Its pathway is cofactor biosynthesis; adenosylcobalamin biosynthesis; cob(II)yrinate a,c-diamide from precorrin-2 (aerobic route): step 9/10. Its function is as follows. Catalyzes the ATP-dependent amidation of the two carboxylate groups at positions a and c of hydrogenobyrinate, using either L-glutamine or ammonia as the nitrogen source. To a much lesser extent, can also use cobyrinate as substrate in vitro, but the physiological substrate is indeed hydrogenobyrinate, as part of the aerobic pathway for cobalamin biosynthesis. The chain is Hydrogenobyrinate a,c-diamide synthase from Sinorhizobium sp.